Consider the following 225-residue polypeptide: Recoverin family protein DDB_G0274781 (225 aa).

Residues 1–13 are compositionally biased toward low complexity; the sequence is MGNKQGKSPNNSK. The tract at residues 1–20 is disordered; sequence MGNKQGKSPNNSKGGKKYKI. A lipid anchor (N-myristoyl glycine) is attached at Gly2. 3 EF-hand domains span residues 78-113, 114-149, and 174-209; these read DNSPFGDRLFDLLDTNKDNTVDLQEFISGLSILCKG, TAEEKLELSFKAYDIDGNGYITKSELSQMFQQAWIS, and MAQIFADGAFSSLDVNGDGKLSFNEFKQFAMSHPKI. 15 residues coordinate Ca(2+): Asp91, Asn93, Asp95, Thr97, Glu102, Asp127, Asp129, Asn131, Tyr133, Glu138, Asp187, Asn189, Asp191, Lys193, and Glu198.

Belongs to the recoverin family.

The protein is Recoverin family protein DDB_G0274781 of Dictyostelium discoideum (Social amoeba).